We begin with the raw amino-acid sequence, 79 residues long: Protein S100-G (79 aa).

The residue at position 2 (serine 2) is an N-acetylserine. EF-hand domains are found at residues 13–48 and 45–79; these read IFQK…KASS and KASS…KLSQ. 2 residues coordinate Ca(2+): glutamine 26 and glutamate 31. Phosphoserine occurs at positions 42 and 47. Residues aspartate 58, asparagine 60, aspartate 62, glutamate 64, and glutamate 69 each coordinate Ca(2+).

It belongs to the S-100 family.

The protein is Protein S100-G (S100g) of Rattus norvegicus (Rat).